Reading from the N-terminus, the 239-residue chain is RNA chaperone ProQ (239 aa).

The disordered stretch occupies residues lysine 107–alanine 177. Residues alanine 115–threonine 137 are compositionally biased toward basic and acidic residues.

Belongs to the ProQ family.

The protein resides in the cytoplasm. RNA chaperone with significant RNA binding, RNA strand exchange and RNA duplexing activities. May regulate ProP activity through an RNA-based, post-transcriptional mechanism. This Photorhabdus laumondii subsp. laumondii (strain DSM 15139 / CIP 105565 / TT01) (Photorhabdus luminescens subsp. laumondii) protein is RNA chaperone ProQ.